We begin with the raw amino-acid sequence, 249 residues long: Probable transcriptional regulatory protein CYA_2259 (249 aa).

It belongs to the TACO1 family.

The protein localises to the cytoplasm. This chain is Probable transcriptional regulatory protein CYA_2259, found in Synechococcus sp. (strain JA-3-3Ab) (Cyanobacteria bacterium Yellowstone A-Prime).